Reading from the N-terminus, the 531-residue chain is MRSSLSRQTFSTKGGFSSNSASGGGGSRMRTSYSSVTMSRGSGGGGGVRSGSSSGGFGSRSLYNLGGKNISVSMACGASSGRALGGFGSGAYVGLGASRQTFGPVCPPGGIQEVTVNQSLLTPLNVEIDPEIQRVRTQEREQIKTLNNKFASFIDKVRFLEQQNKVLETKWALLQEQSQNTGVARSLEPFFENYLSTLRRQLDTKQSERGRLDMELRNVQDNLEDFKNKYEDEINKRTALENEFVLLKKDVDAAYMGRMDLHGKVDSLTQEIDFLQQLFEMELSQVQTNVSDTNVILSMDNNRNLDLDSIIAEVKAQYELIAQKSRAEAESWYQTKYEELQVTAGKHGDSLRDTKNEIAELTRTTQRLQGEVDAAKKQCQQLQTAIAEAEQNGEMALKDAKKKLGDLDTALHQAKEDLARMLREYQDLVSVKLALDMEIATYRKLLESEESRMSGDCPSAISISVTGNSTSVCAGGTAGFGNGLSLGGAGGASKGGFGSSVSYGAAKGGQVSGGTSILRKTTTVKTSSRRY.

Polar residues predominate over residues 1–12; sequence MRSSLSRQTFST. Residues 1 to 55 form a disordered region; it reads MRSSLSRQTFSTKGGFSSNSASGGGGSRMRTSYSSVTMSRGSGGGGGVRSGSSSG. A head region spans residues 1 to 138; sequence MRSSLSRQTF…DPEIQRVRTQ (138 aa). Low complexity predominate over residues 28 to 40; that stretch reads RMRTSYSSVTMSR. Gly residues predominate over residues 41–55; it reads GSGGGGGVRSGSSSG. The interval 139–174 is coil 1A; sequence EREQIKTLNNKFASFIDKVRFLEQQNKVLETKWALL. An IF rod domain is found at 139 to 453; sequence EREQIKTLNN…KLLESEESRM (315 aa). The linker 1 stretch occupies residues 175–194; it reads QEQSQNTGVARSLEPFFENY. The tract at residues 195–286 is coil 1B; it reads LSTLRRQLDT…QLFEMELSQV (92 aa). The linker 12 stretch occupies residues 287 to 310; it reads QTNVSDTNVILSMDNNRNLDLDSI. A coil 2 region spans residues 311 to 449; it reads IAEVKAQYEL…ATYRKLLESE (139 aa). Residues 450-531 form a tail region; sequence ESRMSGDCPS…TTVKTSSRRY (82 aa).

The protein belongs to the intermediate filament family. Heterotetramer of two type I and two type II keratins.

In Mus musculus (Mouse), this protein is Keratin, type II cytoskeletal 79 (Krt79).